We begin with the raw amino-acid sequence, 709 residues long: D-(-)-3-hydroxybutyrate oligomer hydrolase (709 aa).

An N-terminal signal peptide occupies residues 1 to 26; it reads MTVFKTAPLLIAALAASSCGGGGSGA. Positions 58-77 are disordered; the sequence is GLGRSGLQDDSPPGYAGSQP. Residue Ser-305 is the Charge relay system of the active site.

It belongs to the D-(-)-3-hydroxybutyrate oligomer hydrolase family.

The protein resides in the secreted. The enzyme catalyses (3R)-hydroxybutanoate dimer + H2O = 2 (R)-3-hydroxybutanoate + H(+). The protein operates within lipid metabolism; butanoate metabolism. Functionally, participates in the degradation of poly-3-hydroxybutyrate (PHB). It works downstream of poly(3-hydroxybutyrate) depolymerase, hydrolyzing D(-)-3-hydroxybutyrate oligomers of various length (3HB-oligomers) into 3HB-monomers. The chain is D-(-)-3-hydroxybutyrate oligomer hydrolase from Paracidovorax citrulli (strain AAC00-1) (Acidovorax citrulli).